Reading from the N-terminus, the 102-residue chain is Large ribosomal subunit protein bL21 (102 aa).

It belongs to the bacterial ribosomal protein bL21 family. Part of the 50S ribosomal subunit. Contacts protein L20.

Its function is as follows. This protein binds to 23S rRNA in the presence of protein L20. In Campylobacter jejuni subsp. doylei (strain ATCC BAA-1458 / RM4099 / 269.97), this protein is Large ribosomal subunit protein bL21.